A 679-amino-acid polypeptide reads, in one-letter code: MTSSPTHQVVHEANNIKKQETPKEFFERQPRQGHITSLEQYQELYEKSINDPETFFGEFGKELLHWDRDFERVKSGSLLHGDAAWFIGGQLNACYNCVDRHAFATPNKPAIIYEADEEKDSKILTFAELLREVCQVAGVLQSWGIKKGDTVAIYMPMNSQAIIAMLAVARLGAIHSVIFAGFSSGSIKDRVNDASCKALITCDEGRRGGKTINIKKLCDEALLNCPSIEKVLVYERTGNKEVTLKEGRDYWWSEETQKFAGYLPPVPVNSEDPLFLLYTSGSTGTPKGVVHSTAGYLLGAALTTKYVFDIHPEDVLFTAGDVGWITGHTYALYGPLSLGVPTVVFEGTPAFPDYGRLWQIVEKHKATHFYVAPTALRLLRKSGEQEIEKYDLSSLRTLGSVGEPISPDIWEWYNEKVGKGQCHVTDTYWQTESGSHFIAPIAGVVPNKPGSAAVPFFGIQTCLIDPVSGIEIQGNDVEGVLAVKDTWPSMARSVYKNHTKYMDTYLNPYPGYYFTGDGAARDHDGYYWIRGRVDDVVNVSGHRLSTAEIEAALIEHNAISEAAVVGMNDDLTGQTVVAFVALKEHLIANLKADESPEEALKLKKEMILQVRTQIGPFAAPKSVIIVEDLPKTRSGKIMRRILRKIAAGEADQLGDITTLSNPQSVAGIIGSFDSQFGKK.

The disordered stretch occupies residues 1–32; sequence MTSSPTHQVVHEANNIKKQETPKEFFERQPRQ. The span at 14 to 30 shows a compositional bias: basic and acidic residues; the sequence is NNIKKQETPKEFFERQP. CoA contacts are provided by residues 207-210 and T326; that span reads RGGK. ATP-binding positions include 402 to 404, 426 to 431, D517, and R532; these read GEP and DTYWQT. A CoA-binding site is contributed by S540. R543 is an ATP binding site. Position 611 (R611) interacts with CoA.

It belongs to the ATP-dependent AMP-binding enzyme family.

It catalyses the reaction acetate + ATP + CoA = acetyl-CoA + AMP + diphosphate. The chain is Acetyl-coenzyme A synthetase 2 (ACS2) from Debaryomyces hansenii (strain ATCC 36239 / CBS 767 / BCRC 21394 / JCM 1990 / NBRC 0083 / IGC 2968) (Yeast).